The sequence spans 163 residues: NADH-quinone oxidoreductase subunit I (163 aa).

2 consecutive 4Fe-4S ferredoxin-type domains span residues 54-84 (LRRY…IESE) and 94-123 (TRYD…ETRI). [4Fe-4S] cluster-binding residues include cysteine 64, cysteine 67, cysteine 70, cysteine 74, cysteine 103, cysteine 106, cysteine 109, and cysteine 113.

This sequence belongs to the complex I 23 kDa subunit family. In terms of assembly, NDH-1 is composed of 14 different subunits. Subunits NuoA, H, J, K, L, M, N constitute the membrane sector of the complex. The cofactor is [4Fe-4S] cluster.

It localises to the cell inner membrane. The enzyme catalyses a quinone + NADH + 5 H(+)(in) = a quinol + NAD(+) + 4 H(+)(out). In terms of biological role, NDH-1 shuttles electrons from NADH, via FMN and iron-sulfur (Fe-S) centers, to quinones in the respiratory chain. The immediate electron acceptor for the enzyme in this species is believed to be ubiquinone. Couples the redox reaction to proton translocation (for every two electrons transferred, four hydrogen ions are translocated across the cytoplasmic membrane), and thus conserves the redox energy in a proton gradient. The chain is NADH-quinone oxidoreductase subunit I from Methylobacillus flagellatus (strain ATCC 51484 / DSM 6875 / VKM B-1610 / KT).